The chain runs to 637 residues: Probable potassium transport system protein Kup (637 aa).

A run of 12 helical transmembrane segments spans residues 25–45 (ISLA…LYAI), 62–82 (VLGV…LKYL), 115–135 (WFLV…GMIT), 149–169 (IIAP…LTGL), 180–200 (VGAL…VLGL), 227–247 (LQGF…EALY), 263–283 (ILFV…LLLF), 295–315 (LVPS…TIIA), 352–372 (IYVP…VIGF), 378–398 (LAAA…ILFY), 410–430 (LATN…FGAS), and 434–454 (LFHG…LMLT).

Belongs to the HAK/KUP transporter (TC 2.A.72) family.

It is found in the cell inner membrane. It carries out the reaction K(+)(in) + H(+)(in) = K(+)(out) + H(+)(out). In terms of biological role, transport of potassium into the cell. Likely operates as a K(+):H(+) symporter. The chain is Probable potassium transport system protein Kup from Chlorobium phaeobacteroides (strain DSM 266 / SMG 266 / 2430).